The sequence spans 390 residues: Transcription factor bHLH76 (390 aa).

Residues asparagine 147–lysine 217 form a disordered region. A compositionally biased stretch (basic and acidic residues) spans asparagine 207–lysine 217. One can recognise a bHLH domain in the interval glutamine 229–leucine 279.

In terms of assembly, homodimer. Interacts with IBH1. Binds reversibly to CRY2 after blue light illumination. In terms of tissue distribution, expressed constitutively in roots, leaves, stems, and flowers.

The protein resides in the nucleus. Transcriptional activator involved in cell elongation. Regulates the expression of a subset of genes involved in cell expansion by binding to the G-box motif. Binds to chromatin DNA of the FT gene and promotes its expression, and thus triggers flowering in response to blue light. This chain is Transcription factor bHLH76 (BHLH76), found in Arabidopsis thaliana (Mouse-ear cress).